The sequence spans 224 residues: Octanoyltransferase (224 aa).

Residues 29–224 (EATPDALWIC…GQKLATYLAP (196 aa)) form the BPL/LPL catalytic domain. Substrate-binding positions include 68–75 (RGGQVTFH), 157–159 (ALG), and 170–172 (GVA). The active-site Acyl-thioester intermediate is the C188.

It belongs to the LipB family.

It is found in the cytoplasm. The catalysed reaction is octanoyl-[ACP] + L-lysyl-[protein] = N(6)-octanoyl-L-lysyl-[protein] + holo-[ACP] + H(+). It participates in protein modification; protein lipoylation via endogenous pathway; protein N(6)-(lipoyl)lysine from octanoyl-[acyl-carrier-protein]: step 1/2. Catalyzes the transfer of endogenously produced octanoic acid from octanoyl-acyl-carrier-protein onto the lipoyl domains of lipoate-dependent enzymes. Lipoyl-ACP can also act as a substrate although octanoyl-ACP is likely to be the physiological substrate. This chain is Octanoyltransferase, found in Polaromonas naphthalenivorans (strain CJ2).